The chain runs to 987 residues: Ephrin type-B receptor 4a (987 aa).

The signal sequence occupies residues 1–24 (MELFSRNVAAFWIILLEFLLGSVA). Residues 25–548 (EEEVLMNTKT…DSSSPLLVTG (524 aa)) lie on the Extracellular side of the membrane. One can recognise an Eph LBD domain in the interval 26–205 (EEVLMNTKTE…FFKKCPALTR (180 aa)). Intrachain disulfides connect Cys-70–Cys-187 and Cys-104–Cys-114. Residues 319-340 (DSADTPCTRPPSSPRSPVPQVN) form a disordered region. The span at 326 to 335 (TRPPSSPRSP) shows a compositional bias: pro residues. Fibronectin type-III domains follow at residues 328–438 (PPSS…TSPN) and 442–536 (LVSG…TLPD). The helical transmembrane segment at 549 to 569 (ILIAMGMLLLIIVIGAAIYCI) threads the bilayer. The Cytoplasmic segment spans residues 570–987 (RKQNNYKDPE…QNKAPGNVLY (418 aa)). Residues 621–884 (VKIEEVIGAG…NIVSALDKLI (264 aa)) form the Protein kinase domain. Residues 627–635 (IGAGEFGEV) and Lys-653 each bind ATP. Asp-746 serves as the catalytic Proton acceptor. Residues 914–978 (SSCGTVGDWL…LSSIEALGIQ (65 aa)) enclose the SAM domain.

The protein belongs to the protein kinase superfamily. Tyr protein kinase family. Ephrin receptor subfamily.

It is found in the cell membrane. It catalyses the reaction L-tyrosyl-[protein] + ATP = O-phospho-L-tyrosyl-[protein] + ADP + H(+). In terms of biological role, receptor tyrosine kinase which binds promiscuously transmembrane ephrin-B family ligands residing on adjacent cells, leading to contact-dependent bidirectional signaling into neighboring cells. The signaling pathway downstream of the receptor is referred to as forward signaling while the signaling pathway downstream of the ephrin ligand is referred to as reverse signaling. Together with its cognate ligand/functional ligand EFNB2 is involved in the regulation of cell adhesion and cell migration, and plays a central role in heart morphogenesis, angiogenesis and blood vessel remodeling and permeability. EPHB4-mediated forward signaling controls cellular repulsion and segregation from EFNB2-expressing cells. Involved in somitogenesis. In Danio rerio (Zebrafish), this protein is Ephrin type-B receptor 4a.